The primary structure comprises 241 residues: L-aspartate dehydrogenase (241 aa).

Residues Ala-109 and Asn-164 each coordinate NAD(+). His-193 is a catalytic residue.

The protein belongs to the L-aspartate dehydrogenase family.

The catalysed reaction is L-aspartate + NADP(+) + H2O = oxaloacetate + NH4(+) + NADPH + H(+). It carries out the reaction L-aspartate + NAD(+) + H2O = oxaloacetate + NH4(+) + NADH + H(+). Its pathway is cofactor biosynthesis; NAD(+) biosynthesis; iminoaspartate from L-aspartate (dehydrogenase route): step 1/1. Specifically catalyzes the NAD or NADP-dependent dehydrogenation of L-aspartate to iminoaspartate. The polypeptide is L-aspartate dehydrogenase (Thermotoga sp. (strain RQ2)).